Here is a 680-residue protein sequence, read N- to C-terminus: ABC transporter B family member 24, mitochondrial (680 aa).

A mitochondrion-targeting transit peptide spans 1-75 (MMRVSQLQLC…MFFSTSTSAP (75 aa)). An ABC transmembrane type-1 domain is found at 108 to 402 (VISAFACLVG…LGVVYSDTVQ (295 aa)). 6 consecutive transmembrane segments (helical) span residues 109–129 (ISAFACLVGAKFLNVQVPFLF), 145–165 (NPYLVAAFATPSSVLIGYGIA), 232–252 (AMVFNIMPTILEISMVSCILA), 255–275 (FGAVYALITCLSVGSYIAFTL), 340–360 (FALLNFGQSFIFSTALSTAMV), and 376–396 (LVMVNGLLFQLSLPLYFLGVV). The region spanning 439 to 673 (ISFENVHFSY…SGRYAKLWTQ (235 aa)) is the ABC transporter domain. Residues Tyr448 and 472–483 (GSSGSGKSTILR) each bind ATP.

This sequence belongs to the ABC transporter superfamily. ABCB family. Heavy Metal importer (TC 3.A.1.210) subfamily. In terms of assembly, homodimer. In terms of tissue distribution, mostly expressed at low levels in roots and flowers.

It localises to the mitochondrion inner membrane. In terms of biological role, performs an essential function in the generation of cytoplasmic iron-sulfur proteins by mediating export of Fe/S cluster precursors synthesized by NFS1 and other mitochondrial proteins. Not involved in the export of cyclic pyranopterin monophosphate (cPMP) from mitochondria to the cytosol. This Arabidopsis thaliana (Mouse-ear cress) protein is ABC transporter B family member 24, mitochondrial (ABCB24).